Here is a 57-residue protein sequence, read N- to C-terminus: uncharacterized protein (57 aa).

Its subcellular location is the plastid. This is an uncharacterized protein from Euglena longa (Euglenophycean alga).